A 303-amino-acid chain; its full sequence is Mycothiol acetyltransferase (303 aa).

N-acetyltransferase domains lie at 10 to 156 (ALPG…LAVP) and 162 to 303 (LAVR…SGPR). A 1D-myo-inositol 2-(L-cysteinylamino)-2-deoxy-alpha-D-glucopyranoside-binding site is contributed by E41. 86–88 (LLV) is a binding site for acetyl-CoA. 1D-myo-inositol 2-(L-cysteinylamino)-2-deoxy-alpha-D-glucopyranoside contacts are provided by E189, K228, and E235. Acetyl-CoA is bound by residues 239–241 (LGV) and 246–252 (SGAGLGR). Y272 provides a ligand contact to 1D-myo-inositol 2-(L-cysteinylamino)-2-deoxy-alpha-D-glucopyranoside. Position 277 to 282 (277 to 282 (NLRAVR)) interacts with acetyl-CoA.

Belongs to the acetyltransferase family. MshD subfamily. As to quaternary structure, monomer.

It catalyses the reaction 1D-myo-inositol 2-(L-cysteinylamino)-2-deoxy-alpha-D-glucopyranoside + acetyl-CoA = mycothiol + CoA + H(+). Catalyzes the transfer of acetyl from acetyl-CoA to desacetylmycothiol (Cys-GlcN-Ins) to form mycothiol. This chain is Mycothiol acetyltransferase, found in Kineococcus radiotolerans (strain ATCC BAA-149 / DSM 14245 / SRS30216).